The following is a 352-amino-acid chain: S-norcoclaurine synthase 1 (352 aa).

One can recognise a Fe2OG dioxygenase domain in the interval 200–304 (KPLRTVFNRE…RLSIAAFHDP (105 aa)). Fe cation is bound by residues His-228, Asp-230, and His-285.

Belongs to the iron/ascorbate-dependent oxidoreductase family. In terms of assembly, monomer. It depends on Fe cation as a cofactor.

It carries out the reaction (4-hydroxyphenyl)acetaldehyde + dopamine = (S)-norcoclaurine + H2O. With respect to regulation, inhibited by O-phenanthroline, but not by EDTA. Functionally, involved in the biosynthesis of the common precursor of all benzylisoquinoline alkaloids such as morphine, sanguinarine, codeine or berberine. Condenses dopamine and phenylacetaldehyde, 3,4-dihydrophenylacetaldehyde or 4-hydroxyphenylacetaldehyde. The chain is S-norcoclaurine synthase 1 (NCS1) from Coptis japonica (Japanese goldthread).